The primary structure comprises 426 residues: Protein arginine N-methyltransferase 2 (426 aa).

Disordered regions lie at residues 65–88 (DEEE…GQES) and 155–175 (DEEM…AVAA). Polar residues predominate over residues 73 to 88 (NGVQTNGDRQTHGQES). A compositionally biased stretch (acidic residues) spans 155-168 (DEEMEEDGEQEQEQ). An RMT2 domain is found at 207-426 (PSVTSSRYLN…YRLPLCKYMD (220 aa)). Residues Tyr214, Met243, 263–268 (HGMGIV), 284–286 (EAH), 311–312 (WQ), and Asp331 contribute to the S-adenosyl-L-methionine site.

The protein belongs to the class I-like SAM-binding methyltransferase superfamily. RMT2 methyltransferase family. As to quaternary structure, monomer.

It is found in the cytoplasm. The protein localises to the nucleus. Functionally, S-adenosyl-L-methionine-dependent protein-arginine N-methyltransferase that methylates the delta-nitrogen atom of arginine residues to form N5-methylarginine (type IV) in target proteins. Monomethylates ribosomal protein L12. The sequence is that of Protein arginine N-methyltransferase 2 from Emericella nidulans (strain FGSC A4 / ATCC 38163 / CBS 112.46 / NRRL 194 / M139) (Aspergillus nidulans).